We begin with the raw amino-acid sequence, 74 residues long: Peptide BmKa2 (74 aa).

Positions 1-24 (MSSKTLLVLLLVGVLVSTFFTADA) are cleaved as a signal peptide.

This sequence belongs to the non-disulfide-bridged peptide (NDBP) superfamily. Long chain multifunctional peptide (group 2) family. Expressed by the venom gland.

The protein localises to the secreted. Functionally, highly acidic peptide that may have antibacterial activity. This chain is Peptide BmKa2, found in Olivierus martensii (Manchurian scorpion).